A 355-amino-acid polypeptide reads, in one-letter code: MGCTVSAEDKAAAERSKMIDKNLREDGEKAAREVKLLLLGAGESGKSTIVKQMKIIHEDGYSEEECRQYRAVVYSNTIQSIMAIVKAMGNLQIDFADPQRADDARQLFALSCAAEEQGMLPEDLSGVIRRLWADHGVQACFGRSREYQLNDSAAYYLNDLERIAQSDYIPTQQDVLRTRVKTTGIVETHFTFKDLHFKMFDVGGQRSERKKWIHCFEGVTAIIFCVALSAYDLVLAEDEEMNRMHESMKLFDSICNNKWFTDTSIILFLNKKDLFEEKITQSSLTICFPEYTGANKYDEAASYIQSKFEDLNKRKDTKEIYTHFTCATDTKNVQFVFDAVTDVIIKNNLKDCGLF.

Gly2 carries the N-myristoyl glycine lipid modification. A lipid anchor (S-palmitoyl cysteine) is attached at Cys3. Positions 32 to 355 constitute a G-alpha domain; the sequence is REVKLLLLGA…KNNLKDCGLF (324 aa). The G1 motif stretch occupies residues 35–48; it reads KLLLLGAGESGKST. Residues 40-47, 176-182, 201-205, 270-273, and Ala327 contribute to the GTP site; these read GAGESGKS, LRTRVKT, DVGGQ, and NKKD. Mg(2+) is bound by residues Ser47 and Thr182. The G2 motif stretch occupies residues 174-182; it reads DVLRTRVKT. The G3 motif stretch occupies residues 197–206; the sequence is FKMFDVGGQR. The tract at residues 266–273 is G4 motif; the sequence is ILFLNKKD. Residues 325–330 form a G5 motif region; the sequence is TCATDT.

Belongs to the G-alpha family. G(i/o/t/z) subfamily. In terms of assembly, g proteins are composed of 3 units; alpha, beta and gamma. The alpha chain contains the guanine nucleotide binding site. In this context, interacts with GNB2. Interacts with UNC5B. Interacts with GPSM1. Interacts with RGS12 and RGS14. Interacts (inactive GDP-bound form) with NUCB1 (via GBA motif); the interaction leads to activation of GNAI3. Interacts (inactive GDP-bound form) with CCDC88C/DAPLE (via GBA motif). Interacts (inactive GDP-bound form) with CCDC8A/GIV (via GBA motif). Interacts with CXCR1 and CXCR2.

It localises to the cytoplasm. It is found in the cytoskeleton. Its subcellular location is the microtubule organizing center. The protein resides in the centrosome. The protein localises to the cell membrane. It localises to the membrane. Functionally, guanine nucleotide-binding proteins (G proteins) are involved as modulators or transducers in various transmembrane signaling systems. The G(i) proteins are involved in hormonal regulation of adenylate cyclase: they inhibit the cyclase in response to beta-adrenergic stimuli. May play a role in cell division. This is Guanine nucleotide-binding protein G(i) subunit alpha-2 (Gnai2) from Mus musculus (Mouse).